The primary structure comprises 284 residues: ATP synthase subunit a (284 aa).

6 consecutive transmembrane segments (helical) span residues 55 to 75, 116 to 136, 165 to 185, 196 to 216, 234 to 254, and 255 to 275; these read AIHVDTLGWSIAMGILFLGLF, IAPLALTIFVWILLMNILKLI, FGMSIGVFLLILFYSFKVKGV, PFNHWIMIPFNLLLEILALII, VVFILIALLPLWIQWTLNVPW, and AIFHILVIPLQAFIFTVLTVV.

It belongs to the ATPase A chain family. F-type ATPases have 2 components, CF(1) - the catalytic core - and CF(0) - the membrane proton channel. CF(1) has five subunits: alpha(3), beta(3), gamma(1), delta(1), epsilon(1). CF(0) has three main subunits: a(1), b(2) and c(9-12). The alpha and beta chains form an alternating ring which encloses part of the gamma chain. CF(1) is attached to CF(0) by a central stalk formed by the gamma and epsilon chains, while a peripheral stalk is formed by the delta and b chains.

The protein localises to the cell inner membrane. Functionally, key component of the proton channel; it plays a direct role in the translocation of protons across the membrane. The chain is ATP synthase subunit a from Marinobacter nauticus (strain ATCC 700491 / DSM 11845 / VT8) (Marinobacter aquaeolei).